We begin with the raw amino-acid sequence, 509 residues long: ATP synthase subunit alpha (509 aa).

169 to 176 (GDRQTGKT) lines the ATP pocket.

This sequence belongs to the ATPase alpha/beta chains family. F-type ATPases have 2 components, CF(1) - the catalytic core - and CF(0) - the membrane proton channel. CF(1) has five subunits: alpha(3), beta(3), gamma(1), delta(1), epsilon(1). CF(0) has three main subunits: a(1), b(2) and c(9-12). The alpha and beta chains form an alternating ring which encloses part of the gamma chain. CF(1) is attached to CF(0) by a central stalk formed by the gamma and epsilon chains, while a peripheral stalk is formed by the delta and b chains.

The protein localises to the cell inner membrane. It catalyses the reaction ATP + H2O + 4 H(+)(in) = ADP + phosphate + 5 H(+)(out). Its function is as follows. Produces ATP from ADP in the presence of a proton gradient across the membrane. The alpha chain is a regulatory subunit. This chain is ATP synthase subunit alpha, found in Zymomonas mobilis subsp. mobilis (strain ATCC 31821 / ZM4 / CP4).